Here is a 442-residue protein sequence, read N- to C-terminus: Adenylosuccinate synthetase (442 aa).

GTP-binding positions include 30-36 (GDEGKGK) and 58-60 (GHT). Residue Asp-31 is the Proton acceptor of the active site. Asp-31 and Gly-58 together coordinate Mg(2+). IMP-binding positions include 31-34 (DEGK), 56-59 (NAGH), Thr-148, Arg-162, Asn-241, Thr-256, and Arg-320. His-59 serves as the catalytic Proton donor. Position 316 to 322 (316 to 322 (TTTGRRR)) interacts with substrate. GTP contacts are provided by residues Arg-322, 348-350 (KLD), and 430-432 (GVG).

It belongs to the adenylosuccinate synthetase family. As to quaternary structure, homodimer. Requires Mg(2+) as cofactor.

It is found in the cytoplasm. The enzyme catalyses IMP + L-aspartate + GTP = N(6)-(1,2-dicarboxyethyl)-AMP + GDP + phosphate + 2 H(+). It functions in the pathway purine metabolism; AMP biosynthesis via de novo pathway; AMP from IMP: step 1/2. Functionally, plays an important role in the de novo pathway and in the salvage pathway of purine nucleotide biosynthesis. Catalyzes the first committed step in the biosynthesis of AMP from IMP. The polypeptide is Adenylosuccinate synthetase (Trichoplax adhaerens (Trichoplax reptans)).